Consider the following 198-residue polypeptide: MYEYIKGKYIGINKDYVIVENSGIGYKIFTSGATMSSMPKNGEEIMLYLEQIVREDFIGLYGFDSKEELEMFKLLLTVSGVGPKAALSLLSISRVNNLKYAIMIGDEKHICRGVGIGKKTAARIILEIKDKLKPDELVDSSLEIDTKDNENVMALSEALSALIALGYSEKEAESVLKKIDKNDSVENIIKNALKALMG.

Residues 1–64 (MYEYIKGKYI…EDFIGLYGFD (64 aa)) form a domain I region. The domain II stretch occupies residues 65–143 (SKEELEMFKL…PDELVDSSLE (79 aa)). The segment at 144–149 (IDTKDN) is flexible linker. The interval 150–198 (ENVMALSEALSALIALGYSEKEAESVLKKIDKNDSVENIIKNALKALMG) is domain III.

Belongs to the RuvA family. As to quaternary structure, homotetramer. Forms an RuvA(8)-RuvB(12)-Holliday junction (HJ) complex. HJ DNA is sandwiched between 2 RuvA tetramers; dsDNA enters through RuvA and exits via RuvB. An RuvB hexamer assembles on each DNA strand where it exits the tetramer. Each RuvB hexamer is contacted by two RuvA subunits (via domain III) on 2 adjacent RuvB subunits; this complex drives branch migration. In the full resolvosome a probable DNA-RuvA(4)-RuvB(12)-RuvC(2) complex forms which resolves the HJ.

The protein localises to the cytoplasm. In terms of biological role, the RuvA-RuvB-RuvC complex processes Holliday junction (HJ) DNA during genetic recombination and DNA repair, while the RuvA-RuvB complex plays an important role in the rescue of blocked DNA replication forks via replication fork reversal (RFR). RuvA specifically binds to HJ cruciform DNA, conferring on it an open structure. The RuvB hexamer acts as an ATP-dependent pump, pulling dsDNA into and through the RuvAB complex. HJ branch migration allows RuvC to scan DNA until it finds its consensus sequence, where it cleaves and resolves the cruciform DNA. The sequence is that of Holliday junction branch migration complex subunit RuvA from Clostridium beijerinckii (strain ATCC 51743 / NCIMB 8052) (Clostridium acetobutylicum).